The primary structure comprises 486 residues: MNYFPIFANLAGRPVLVVGGGAVAARKISLLLKAGAEVRVAAKHLNAELSALAAENKILWLAEEFRAEHIRTVFLIIAASSDQALNRRVFHLAESCQKPVNVVDDRDHCSFIFPSVIDRNPVQIAVSSSGSAPVLARLLRERLEALLPPSLGDMAEISGRWRDAVKGKLKSVTERRRFWEKQFNGRFAALVKNRQNTLAERELAGQLEQSRQNDQGGSVSLVGAGPGDAGLLTLKGLQEIQQADVVLYDALVSDGILSLVRRDAERIFVGKRARGGRTPQEDTNALMVRLAREGRRVVRLKGGDPFVFGRGGEELETLARHQIPFSVVPGITAAVGATAYAGIPLTHRDYAQSAVFVTGHRKADAPDIEWQTLARSRQTLVIYMGALKAALIAERLQQHGRSPDTPAAVISQGTLPAQKTATGTLANLAELAETAPNPALIVIGEVVGLHEKLAWFGENAKKESNPAEHAYFALDGLGTGQEQQAA.

The tract at residues 1 to 203 (MNYFPIFANL…RQNTLAEREL (203 aa)) is precorrin-2 dehydrogenase /sirohydrochlorin ferrochelatase. NAD(+) is bound by residues 22–23 (AV) and 43–44 (KH). Residue Ser128 is modified to Phosphoserine. The tract at residues 217-486 (GSVSLVGAGP…LGTGQEQQAA (270 aa)) is uroporphyrinogen-III C-methyltransferase. Pro226 provides a ligand contact to S-adenosyl-L-methionine. Asp249 (proton acceptor) is an active-site residue. Lys271 serves as the catalytic Proton donor. S-adenosyl-L-methionine is bound by residues 302 to 304 (GGD), Val307, 332 to 333 (TA), Met384, and Gly413.

In the N-terminal section; belongs to the precorrin-2 dehydrogenase / sirohydrochlorin ferrochelatase family. The protein in the C-terminal section; belongs to the precorrin methyltransferase family.

It catalyses the reaction uroporphyrinogen III + 2 S-adenosyl-L-methionine = precorrin-2 + 2 S-adenosyl-L-homocysteine + H(+). It carries out the reaction precorrin-2 + NAD(+) = sirohydrochlorin + NADH + 2 H(+). The enzyme catalyses siroheme + 2 H(+) = sirohydrochlorin + Fe(2+). The protein operates within cofactor biosynthesis; adenosylcobalamin biosynthesis; precorrin-2 from uroporphyrinogen III: step 1/1. It functions in the pathway cofactor biosynthesis; adenosylcobalamin biosynthesis; sirohydrochlorin from precorrin-2: step 1/1. It participates in porphyrin-containing compound metabolism; siroheme biosynthesis; precorrin-2 from uroporphyrinogen III: step 1/1. Its pathway is porphyrin-containing compound metabolism; siroheme biosynthesis; siroheme from sirohydrochlorin: step 1/1. The protein operates within porphyrin-containing compound metabolism; siroheme biosynthesis; sirohydrochlorin from precorrin-2: step 1/1. Its function is as follows. Multifunctional enzyme that catalyzes the SAM-dependent methylations of uroporphyrinogen III at position C-2 and C-7 to form precorrin-2 via precorrin-1. Then it catalyzes the NAD-dependent ring dehydrogenation of precorrin-2 to yield sirohydrochlorin. Finally, it catalyzes the ferrochelation of sirohydrochlorin to yield siroheme. The polypeptide is Siroheme synthase (Neisseria meningitidis serogroup A / serotype 4A (strain DSM 15465 / Z2491)).